A 382-amino-acid chain; its full sequence is Protein farnesyltransferase subunit beta (382 aa).

PFTB repeat units lie at residues Cys-78 to Asp-119, Arg-129 to Gly-170, Phe-178 to Gly-219, Glu-226 to Ala-268, and Pro-286 to Ala-328. (2E,6E)-farnesyl diphosphate is bound by residues His-204–Tyr-207 and Arg-247–Lys-250. Asp-253 and Cys-255 together coordinate Zn(2+). (2E,6E)-farnesyl diphosphate is bound at residue Tyr-256 to Trp-259. His-316 serves as a coordination point for Zn(2+).

This sequence belongs to the protein prenyltransferase subunit beta family. In terms of assembly, heterodimer of an alpha(cwp1) and a beta(cpp1) subunit. Zn(2+) is required as a cofactor.

It carries out the reaction L-cysteinyl-[protein] + (2E,6E)-farnesyl diphosphate = S-(2E,6E)-farnesyl-L-cysteinyl-[protein] + diphosphate. Functionally, catalyzes the transfer of a farnesyl moiety from farnesyl diphosphate to a cysteine at the fourth position from the C-terminus of several proteins. The beta(cpp1) subunit is responsible for peptide-binding. This is Protein farnesyltransferase subunit beta (cpp1) from Schizosaccharomyces pombe (strain 972 / ATCC 24843) (Fission yeast).